Consider the following 209-residue polypeptide: Large ribosomal subunit protein uL3 (209 aa).

The protein belongs to the universal ribosomal protein uL3 family. In terms of assembly, part of the 50S ribosomal subunit. Forms a cluster with proteins L14 and L19.

Functionally, one of the primary rRNA binding proteins, it binds directly near the 3'-end of the 23S rRNA, where it nucleates assembly of the 50S subunit. This Brevibacillus brevis (strain 47 / JCM 6285 / NBRC 100599) protein is Large ribosomal subunit protein uL3.